Consider the following 780-residue polypeptide: ATPase family gene 2 protein (780 aa).

Low complexity predominate over residues 1–23 (MAPKSSSSGSKKKSSASSNSADA). Residues 1–26 (MAPKSSSSGSKKKSSASSNSADAKAS) are disordered. ATP is bound by residues 286 to 293 (GPPGTGKT) and 557 to 564 (GPPGCSKT).

This sequence belongs to the AAA ATPase family. AFG2 subfamily. As to quaternary structure, homohexamer; ATP binding induces oligomerization. Forms a ring-shaped particle of about 12 nm diameter, that displays 6-fold radial symmetry. Associates with cytoplasmic pre-60S ribosomal particles containing ARX1, ALB1, RLP24 and NOG1. Binds to pre-60S ribosomal particles soon after their export from the nucleus and is released before REI1 and LSG1 are incorporated into the particles. Hexameric form interacts with RLP24 (via C-terminal); the interaction recruits AFG2 to pre-60S ribosomal particles and promotes AFG2 ATPase activity and RLP24 release from pre-60S ribosomal particles. Interacts (via N-terminus) with nucleoporin NUP116 (via N-terminus); the interaction is required for RLP24 release from pre-60S ribosomal particles.

The protein resides in the cytoplasm. The catalysed reaction is ATP + H2O = ADP + phosphate + H(+). With respect to regulation, the hexamer is activated by RLP24 during pre-60S ribosomal particle maturation; RLP24 activates ATPase activity of both ATP-binding regions and increases cooperativity between AFG2 subunits. The second ATP-binding region is inhibited by diazaborine; the inhibition requires prior ATP binding specifically to the second ATP-binding region. Functionally, ATP-dependent chaperone which uses the energy provided by ATP hydrolysis to generate mechanical force to disassemble protein complexes. Plays an essential role in the cytoplasmic maturation steps of pre-60S ribosomal particles by promoting the release of shuttling protein RLP24 from the pre-ribosomal particles. This step facilitates the subsequent release of other shuttling proteins such as NOG1 and allows the transition of the pre-ribosomal particles to later maturation forms that bind REI1. Essential for viability. This chain is ATPase family gene 2 protein, found in Saccharomyces cerevisiae (strain ATCC 204508 / S288c) (Baker's yeast).